We begin with the raw amino-acid sequence, 983 residues long: UPF0182 protein MLBr00644 (983 aa).

Transmembrane regions (helical) follow at residues 19–39, 63–83, 113–133, 175–195, 210–230, 259–279, and 287–307; these read LIMV…LVDA, VVVF…GLAV, LIGV…AQSY, FVAV…FGGI, LQLV…YWLD, KLIL…AITL, and IGLV…PLIV.

The protein belongs to the UPF0182 family.

Its subcellular location is the cell membrane. The chain is UPF0182 protein MLBr00644 from Mycobacterium leprae (strain Br4923).